The primary structure comprises 143 residues: MPRSPSKSSPRKGSPRKGSPRKGSPKRGGKGAKRAGKGGRRRNVVKRRRRRRESYGSYIYRVLKQVHPDTGISSRGMSVMNSFVNDVFERIAGEASRLCQANRRRTISSREIQTAVRLLLPGELAKHAVSEGTKAVTKYTTSR.

The interval 1–52 is disordered; that stretch reads MPRSPSKSSPRKGSPRKGSPRKGSPKRGGKGAKRAGKGGRRRNVVKRRRRRR. 5 consecutive short sequence motifs (SPKK motif) follow at residues 4–7, 9–12, 14–17, 19–22, and 24–27; these read SPSK, SPRK, and SPKR. Residues 9-52 show a composition bias toward basic residues; it reads SPRKGSPRKGSPRKGSPKRGGKGAKRAGKGGRRRNVVKRRRRRR. Phosphoserine occurs at positions 14, 19, and 24. O-linked (GlcNAc) serine glycosylation occurs at S130. K138 participates in a covalent cross-link: Glycyl lysine isopeptide (Lys-Gly) (interchain with G-Cter in ubiquitin).

It belongs to the histone H2B family. As to quaternary structure, the nucleosome is a histone octamer containing two molecules each of H2A, H2B, H3 and H4 assembled in one H3-H4 heterotetramer and two H2A-H2B heterodimers. The octamer wraps approximately 147 bp of DNA. Monoubiquitination of Lys-138 gives a specific tag for epigenetic transcriptional activation and is also prerequisite for histone H3 'Lys-4' and 'Lys-79' methylation. Post-translationally, phosphorylated on SPKK motifs 3, 4 and 5; which may regulate DNA binding. Dephosphorylated during maturation of spermatids to mature sperm and rephosphorylated at fertilization. In terms of processing, glcNAcylation at Ser-130 promotes monoubiquitination of Lys-138. It fluctuates in response to extracellular glucose, and associates with transcribed genes. Testis-specific.

Its subcellular location is the nucleus. It localises to the chromosome. Its function is as follows. Core component of nucleosome. Nucleosomes wrap and compact DNA into chromatin, limiting DNA accessibility to the cellular machineries which require DNA as a template. Histones thereby play a central role in transcription regulation, DNA repair, DNA replication and chromosomal stability. DNA accessibility is regulated via a complex set of post-translational modifications of histones, also called histone code, and nucleosome remodeling. In Lytechinus pictus (Painted sea urchin), this protein is Histone H2B.2, sperm.